We begin with the raw amino-acid sequence, 120 residues long: Ribosome-binding factor A (120 aa).

Belongs to the RbfA family. As to quaternary structure, monomer. Binds 30S ribosomal subunits, but not 50S ribosomal subunits or 70S ribosomes.

Its subcellular location is the cytoplasm. Its function is as follows. One of several proteins that assist in the late maturation steps of the functional core of the 30S ribosomal subunit. Associates with free 30S ribosomal subunits (but not with 30S subunits that are part of 70S ribosomes or polysomes). Required for efficient processing of 16S rRNA. May interact with the 5'-terminal helix region of 16S rRNA. This chain is Ribosome-binding factor A, found in Lactobacillus delbrueckii subsp. bulgaricus (strain ATCC 11842 / DSM 20081 / BCRC 10696 / JCM 1002 / NBRC 13953 / NCIMB 11778 / NCTC 12712 / WDCM 00102 / Lb 14).